A 66-amino-acid polypeptide reads, in one-letter code: Large ribosomal subunit protein bL33c (66 aa).

Belongs to the bacterial ribosomal protein bL33 family.

The protein resides in the plastid. Its subcellular location is the chloroplast. This chain is Large ribosomal subunit protein bL33c, found in Brachypodium distachyon (Purple false brome).